A 182-amino-acid polypeptide reads, in one-letter code: MPLLNTLATPYAEALLQVTDGRSESDDVAAQCKELLAVWDSSTALRDAMTSPVLEPAAKKQALAQLLAEQIKPSLMNLLKVLADRQRLTALDAVLRRYLELYRESRNISLAHVRCAQALSDDQTKALTAKVQSMVGTGSVEIDLTIDASLIGGFVINIGSQVIDASLSGQVRRLGLSLAKAS.

Belongs to the ATPase delta chain family. In terms of assembly, F-type ATPases have 2 components, F(1) - the catalytic core - and F(0) - the membrane proton channel. F(1) has five subunits: alpha(3), beta(3), gamma(1), delta(1), epsilon(1). CF(0) has four main subunits: a(1), b(1), b'(1) and c(10-14). The alpha and beta chains form an alternating ring which encloses part of the gamma chain. F(1) is attached to F(0) by a central stalk formed by the gamma and epsilon chains, while a peripheral stalk is formed by the delta, b and b' chains.

The protein localises to the cellular thylakoid membrane. In terms of biological role, f(1)F(0) ATP synthase produces ATP from ADP in the presence of a proton or sodium gradient. F-type ATPases consist of two structural domains, F(1) containing the extramembraneous catalytic core and F(0) containing the membrane proton channel, linked together by a central stalk and a peripheral stalk. During catalysis, ATP synthesis in the catalytic domain of F(1) is coupled via a rotary mechanism of the central stalk subunits to proton translocation. This protein is part of the stalk that links CF(0) to CF(1). It either transmits conformational changes from CF(0) to CF(1) or is implicated in proton conduction. This chain is ATP synthase subunit delta, found in Synechococcus sp. (strain WH7803).